We begin with the raw amino-acid sequence, 438 residues long: Fibrinogen gamma chain (438 aa).

An N-terminal signal peptide occupies residues 1–25 (MTRLPKQGLLLLQSLALLSSAFGNI). N-linked (GlcNAc...) asparagine glycosylation is present at asparagine 76. A Fibrinogen C-terminal domain is found at 167–414 (QIQEFTGKDC…SVTMKIMPLN (248 aa)). A disulfide bridge links cysteine 176 with cysteine 205. The Ca(2+) site is built by aspartate 341, aspartate 343, and glycine 347. Cysteine 349 and cysteine 362 are disulfide-bonded.

As to quaternary structure, heterohexamer; disulfide linked. Contains 2 sets of 3 non-identical chains (alpha, beta and gamma). The 2 heterotrimers are in head to head conformation with the N-termini in a small central domain. Conversion of fibrinogen to fibrin is triggered by thrombin, which cleaves fibrinopeptides A and B from alpha and beta chains, and thus exposes the N-terminal polymerization sites responsible for the formation of the soft clot. The soft clot is converted into the hard clot by factor XIIIA which catalyzes the epsilon-(gamma-glutamyl)lysine cross-linking between gamma chains (stronger) and between alpha chains (weaker) of different monomers.

The protein resides in the secreted. Together with fibrinogen alpha (FGA) and fibrinogen beta (FGB), polymerizes to form an insoluble fibrin matrix. Has a major function in hemostasis as one of the primary components of blood clots. The chain is Fibrinogen gamma chain (fgg) from Xenopus laevis (African clawed frog).